A 233-amino-acid chain; its full sequence is Uridylate kinase (233 aa).

9–10 (GS) contacts ATP. G43 serves as a coordination point for UMP. Positions 44 and 48 each coordinate ATP. UMP is bound by residues D65 and 113–119 (VTPGQTT). Positions 139, 145, and 148 each coordinate ATP.

Belongs to the UMP kinase family. As to quaternary structure, homohexamer.

The protein resides in the cytoplasm. The enzyme catalyses UMP + ATP = UDP + ADP. It functions in the pathway pyrimidine metabolism; CTP biosynthesis via de novo pathway; UDP from UMP (UMPK route): step 1/1. With respect to regulation, inhibited by UTP. Its function is as follows. Catalyzes the reversible phosphorylation of UMP to UDP. The protein is Uridylate kinase of Methanosarcina barkeri (strain Fusaro / DSM 804).